The sequence spans 274 residues: Diaminopimelate epimerase (274 aa).

Substrate-binding residues include N11, Q44, and N64. Residue C73 is the Proton donor of the active site. Substrate is bound by residues 74–75, N157, N190, and 208–209; these read GN and ER. C217 serves as the catalytic Proton acceptor. 218–219 contributes to the substrate binding site; it reads GS.

Belongs to the diaminopimelate epimerase family. In terms of assembly, homodimer.

The protein localises to the cytoplasm. It carries out the reaction (2S,6S)-2,6-diaminopimelate = meso-2,6-diaminopimelate. Its pathway is amino-acid biosynthesis; L-lysine biosynthesis via DAP pathway; DL-2,6-diaminopimelate from LL-2,6-diaminopimelate: step 1/1. Its function is as follows. Catalyzes the stereoinversion of LL-2,6-diaminopimelate (L,L-DAP) to meso-diaminopimelate (meso-DAP), a precursor of L-lysine and an essential component of the bacterial peptidoglycan. This chain is Diaminopimelate epimerase, found in Actinobacillus pleuropneumoniae serotype 3 (strain JL03).